The chain runs to 313 residues: ADP,ATP carrier protein (313 aa).

Solcar repeat units follow at residues 11–104 (PPFV…FKKM), 116–208 (KWMA…IKPV), and 216–302 (NNFL…LQVL). The next 5 helical transmembrane spans lie at 13 to 40 (FVAD…IKLL), 81 to 105 (TANV…KKMF), 114 to 134 (YWKW…TSLL), 184 to 205 (FGPS…YDSI), and 219 to 239 (LASF…SYPL). Residues arginine 86 and arginine 98 each contribute to the ADP site. Arginine 243 lines the ADP pocket. The important for transport activity stretch occupies residues 243–248 (RRRMMM). The short motif at 243–248 (RRRMMM) is the Nucleotide carrier signature motif element. A helical membrane pass occupies residues 279–299 (AGANILRGVAGAGVLSIYDQL).

It belongs to the mitochondrial carrier (TC 2.A.29) family. As to quaternary structure, monomer.

The protein localises to the mitochondrion inner membrane. It carries out the reaction ADP(in) + ATP(out) = ADP(out) + ATP(in). With respect to regulation, the matrix-open state (m-state) is inhibited by the membrane-permeable bongkrekic acid (BKA). The cytoplasmic-open state (c-state) is inhibited by the membrane-impermeable toxic inhibitor carboxyatractyloside (CATR). ADP:ATP antiporter that mediates import of ADP into the mitochondrial matrix for ATP synthesis, and export of ATP out to fuel the cell. Cycles between the cytoplasmic-open state (c-state) and the matrix-open state (m-state): operates by the alternating access mechanism with a single substrate-binding site intermittently exposed to either the cytosolic (c-state) or matrix (m-state) side of the inner mitochondrial membrane. The sequence is that of ADP,ATP carrier protein (aac) from Neurospora crassa (strain ATCC 24698 / 74-OR23-1A / CBS 708.71 / DSM 1257 / FGSC 987).